A 453-amino-acid polypeptide reads, in one-letter code: Allantoinase (453 aa).

Residues histidine 59, histidine 61, lysine 146, histidine 186, histidine 242, and aspartate 315 each contribute to the Zn(2+) site. Position 146 is an N6-carboxylysine (lysine 146).

The protein belongs to the metallo-dependent hydrolases superfamily. Allantoinase family. Homotetramer. Zn(2+) serves as cofactor. In terms of processing, carboxylation allows a single lysine to coordinate two zinc ions.

The catalysed reaction is (S)-allantoin + H2O = allantoate + H(+). Its pathway is nitrogen metabolism; (S)-allantoin degradation; allantoate from (S)-allantoin: step 1/1. Catalyzes the conversion of allantoin (5-ureidohydantoin) to allantoic acid by hydrolytic cleavage of the five-member hydantoin ring. The chain is Allantoinase from Escherichia coli O139:H28 (strain E24377A / ETEC).